Consider the following 413-residue polypeptide: Aminopeptidase PepS (413 aa).

6 residues coordinate a divalent metal cation: glutamate 253, glutamate 319, glutamate 343, histidine 348, histidine 381, and aspartate 383.

It belongs to the peptidase M29 family. As to quaternary structure, monomer. Requires Co(2+) as cofactor. The cofactor is Zn(2+). It depends on Mg(2+) as a cofactor.

Functionally, exhibits a high specificity towards peptides possessing arginine or aromatic amino acids at the N-terminus. Could be involved both in bacterial growth by supplying amino acids. The sequence is that of Aminopeptidase PepS (pepS) from Streptococcus thermophilus.